The following is a 78-amino-acid chain: Large ribosomal subunit protein bL28 (78 aa).

A disordered region spans residues 1–25; that stretch reads MARVCQVTGKRPMSGHHVSHANNKT. A compositionally biased stretch (basic residues) spans 13–25; the sequence is MSGHHVSHANNKT.

The protein belongs to the bacterial ribosomal protein bL28 family.

This is Large ribosomal subunit protein bL28 from Nitrosomonas eutropha (strain DSM 101675 / C91 / Nm57).